Consider the following 592-residue polypeptide: A-type ATP synthase subunit A (592 aa).

An ATP-binding site is contributed by 231-238; it reads GGFGTGKT.

It belongs to the ATPase alpha/beta chains family. As to quaternary structure, has multiple subunits with at least A(3), B(3), C, D, E, F, H, I and proteolipid K(x).

The protein localises to the cell membrane. It catalyses the reaction ATP + H2O + 4 H(+)(in) = ADP + phosphate + 5 H(+)(out). Component of the A-type ATP synthase that produces ATP from ADP in the presence of a proton gradient across the membrane. The A chain is the catalytic subunit. The sequence is that of A-type ATP synthase subunit A from Staphylothermus marinus (strain ATCC 43588 / DSM 3639 / JCM 9404 / F1).